Reading from the N-terminus, the 536-residue chain is ATP synthase subunit alpha, mitochondrial (536 aa).

Residues 1–27 (MLRQAGTRLLKVPVCGLRPSITLKRGY) constitute a mitochondrion transit peptide. ATP is bound at residue 197–204 (GDRQTGKT).

It belongs to the ATPase alpha/beta chains family. In terms of assembly, F-type ATPases have 2 components, CF(1) - the catalytic core - and CF(0) - the membrane proton channel. CF(1) has five subunits: alpha(3), beta(3), gamma(1), delta(1), epsilon(1). CF(0) has three main subunits: a, b and c.

The protein localises to the mitochondrion. The protein resides in the mitochondrion inner membrane. In terms of biological role, mitochondrial membrane ATP synthase (F(1)F(0) ATP synthase or Complex V) produces ATP from ADP in the presence of a proton gradient across the membrane which is generated by electron transport complexes of the respiratory chain. F-type ATPases consist of two structural domains, F(1) - containing the extramembraneous catalytic core, and F(0) - containing the membrane proton channel, linked together by a central stalk and a peripheral stalk. During catalysis, ATP synthesis in the catalytic domain of F(1) is coupled via a rotary mechanism of the central stalk subunits to proton translocation. Subunits alpha and beta form the catalytic core in F(1). Rotation of the central stalk against the surrounding alpha(3)beta(3) subunits leads to hydrolysis of ATP in three separate catalytic sites on the beta subunits. Subunit alpha does not bear the catalytic high-affinity ATP-binding sites. The sequence is that of ATP synthase subunit alpha, mitochondrial (atp1) from Schizosaccharomyces pombe (strain 972 / ATCC 24843) (Fission yeast).